Consider the following 271-residue polypeptide: Methylthioribulose-1-phosphate dehydratase (271 aa).

Substrate is bound at residue C123. H141 and H143 together coordinate Zn(2+). Residue E166 is the Proton donor/acceptor of the active site. H231 provides a ligand contact to Zn(2+).

The protein belongs to the aldolase class II family. MtnB subfamily. Zn(2+) is required as a cofactor.

It is found in the cytoplasm. It carries out the reaction 5-(methylsulfanyl)-D-ribulose 1-phosphate = 5-methylsulfanyl-2,3-dioxopentyl phosphate + H2O. Its pathway is amino-acid biosynthesis; L-methionine biosynthesis via salvage pathway; L-methionine from S-methyl-5-thio-alpha-D-ribose 1-phosphate: step 2/6. Its function is as follows. Catalyzes the dehydration of methylthioribulose-1-phosphate (MTRu-1-P) into 2,3-diketo-5-methylthiopentyl-1-phosphate (DK-MTP-1-P). The polypeptide is Methylthioribulose-1-phosphate dehydratase (Candida dubliniensis (strain CD36 / ATCC MYA-646 / CBS 7987 / NCPF 3949 / NRRL Y-17841) (Yeast)).